Consider the following 124-residue polypeptide: Small ribosomal subunit protein uS12 (124 aa).

The disordered stretch occupies residues 1 to 30 (MPTIQQLVRKGRTPKVTKTKAPALKANPQQ). Residues 9 to 18 (RKGRTPKVTK) show a composition bias toward basic residues.

This sequence belongs to the universal ribosomal protein uS12 family. In terms of assembly, part of the 30S ribosomal subunit. Contacts proteins S8 and S17. May interact with IF1 in the 30S initiation complex.

Its function is as follows. With S4 and S5 plays an important role in translational accuracy. In terms of biological role, interacts with and stabilizes bases of the 16S rRNA that are involved in tRNA selection in the A site and with the mRNA backbone. Located at the interface of the 30S and 50S subunits, it traverses the body of the 30S subunit contacting proteins on the other side and probably holding the rRNA structure together. The combined cluster of proteins S8, S12 and S17 appears to hold together the shoulder and platform of the 30S subunit. In Leifsonia xyli subsp. xyli (strain CTCB07), this protein is Small ribosomal subunit protein uS12.